Reading from the N-terminus, the 402-residue chain is NADH-quinone oxidoreductase subunit D (402 aa).

Belongs to the complex I 49 kDa subunit family. NDH-1 is composed of 14 different subunits. Subunits NuoB, C, D, E, F, and G constitute the peripheral sector of the complex.

It localises to the cell inner membrane. The enzyme catalyses a quinone + NADH + 5 H(+)(in) = a quinol + NAD(+) + 4 H(+)(out). NDH-1 shuttles electrons from NADH, via FMN and iron-sulfur (Fe-S) centers, to quinones in the respiratory chain. The immediate electron acceptor for the enzyme in this species is believed to be ubiquinone. Couples the redox reaction to proton translocation (for every two electrons transferred, four hydrogen ions are translocated across the cytoplasmic membrane), and thus conserves the redox energy in a proton gradient. The polypeptide is NADH-quinone oxidoreductase subunit D (Protochlamydia amoebophila (strain UWE25)).